The sequence spans 97 residues: MDITDIRIKKVESKNSGSKLLAYVAVTFDNCLVLHNIRVIKGQKGVFIAMPNRRTRVGEYKDIVHPISQDFRKTLQTSIFKEYVRENPADLELELDF.

This sequence belongs to the SpoVG family.

In terms of biological role, could be involved in septation. In Borreliella afzelii (strain PKo) (Borrelia afzelii), this protein is Putative septation protein SpoVG.